Consider the following 239-residue polypeptide: Exosome complex exonuclease RRP46 homolog (239 aa).

The residue at position 1 (methionine 1) is an N-acetylmethionine.

This sequence belongs to the RNase PH family. Probable component of the RNA exosome complex.

The protein localises to the nucleus. The protein resides in the nucleolus. In terms of biological role, probable component of the exosome 3'-&gt;5' exoribonuclease complex, a complex that degrades inherently unstable mRNAs containing AU-rich elements (AREs) within their 3'-untranslated regions. The protein is Exosome complex exonuclease RRP46 homolog of Arabidopsis thaliana (Mouse-ear cress).